We begin with the raw amino-acid sequence, 568 residues long: MTTNGILQILAFTAIIWALAKPIGGFMAKVFAGERTWLHRILRPVEVAIYKLCGVDEAAEQRWTGYAGSLLAFSLVSLLFTYLIQRVQQWLPLNPQGLANVAADLGWNTAASFTTNTNWQAYTPETTMSYITQMIALATHNFFSAAAGIAVAIAFVRGFSRHSANTLGNFWVDFTRATLYILLPMSLLAALFFCSQGVIQNLDPYTKVTTLEGAVQTIPQGPVASQEAIKMLGTNGGGFFNANSAHPYENPTPLANLAQMVLIFLIPAGLTYTFGKMIKDTRQGWALLAAMTVLFLAGVCVVYPAEQAGNPVITRLGVAGGNMEGKEVRFGIANSALFTVVTTDASCGAVNNVHDSLTPLGGLVPLVNIELGEVVFGGVGSGLYGMLLFAILAVFIAGLMVGRTPEYLGKKIEQKEVKMVMLSVLVLALCILGFSAAGIGQQTVANSMTNHGPHGLTEVLYGYTSAAGNNGSAFAGLSANTMYLNTTLGIAMLCGRFLMLIPLLAAAGSLAQKKLVPVSAGTFPTHGPLFVTLLVGVVVIVGALTFFPALSLGPIVEHFLMHQGRLWS.

Transmembrane regions (helical) follow at residues 6–26 (ILQI…IGGF), 64–84 (TGYA…TYLI), 135–155 (IALA…AIAF), 179–199 (LYIL…QGVI), 254–274 (LANL…TYTF), 285–305 (WALL…VYPA), 382–402 (GLYG…LMVG), 419–439 (MVML…AAGI), 459–481 (VLYG…SANT), 488–508 (LGIA…AAAG), and 529–549 (LFVT…FFPA).

This sequence belongs to the KdpA family. The system is composed of three essential subunits: KdpA, KdpB and KdpC.

Its subcellular location is the cell inner membrane. Its function is as follows. Part of the high-affinity ATP-driven potassium transport (or Kdp) system, which catalyzes the hydrolysis of ATP coupled with the electrogenic transport of potassium into the cytoplasm. This subunit binds the periplasmic potassium ions and delivers the ions to the membrane domain of KdpB through an intramembrane tunnel. This chain is Potassium-transporting ATPase potassium-binding subunit, found in Solibacter usitatus (strain Ellin6076).